The following is a 228-amino-acid chain: Cytidylate kinase (228 aa).

11–19 (GPASAGKST) lines the ATP pocket.

It belongs to the cytidylate kinase family. Type 1 subfamily.

Its subcellular location is the cytoplasm. It carries out the reaction CMP + ATP = CDP + ADP. The enzyme catalyses dCMP + ATP = dCDP + ADP. In Limosilactobacillus reuteri (strain DSM 20016) (Lactobacillus reuteri), this protein is Cytidylate kinase.